The sequence spans 1129 residues: Egg-laying defective protein 27 (1129 aa).

Over residues 1–11 the composition is skewed to polar residues; it reads MSRFDSQCSSE. The segment at 1-43 is disordered; it reads MSRFDSQCSSEDVNKEDECVPSSSEDSQDGVSSPMENDDEPEF. Low complexity predominate over residues 22–33; that stretch reads SSSEDSQDGVSS. A BAH domain is found at 87–223; the sequence is TLYRLRDSVF…QDSTKLASTH (137 aa). In terms of domain architecture, ELM2 spans 224 to 327; the sequence is YAIRVGTSFQ…DALSELNAND (104 aa). Residues 332–384 enclose the SANT domain; the sequence is TDVDNMTQDDAKKFAKGIKQLGKNFSRIHRELLPHHSREQLVSYYYLWKKTPE. The segment at 388-434 is disordered; that stretch reads PKQAARRVNPTSIKRPTKEKVKASRPTSTEYLDFDSASESDVENNGP. The segment covering 419–429 has biased composition (acidic residues); sequence LDFDSASESDV. A GATA-type; atypical zinc finger spans residues 439-485; the sequence is CHHCYGAESKDWHHANGLLLCTDCRLHYKKYGQLRQIANRPSQVPAC. Disordered stretches follow at residues 488 to 636, 693 to 717, 790 to 814, 899 to 950, and 982 to 1040; these read KRSN…DPMP, RDETNGETNSDLKDDENVEPDSPED, QQNQIKKEQQQSQPTPQQIHQQQAQ, MIAE…HAAA, and MAAQ…REHA. Composition is skewed to polar residues over residues 525–545 and 561–573; these read PSTVSNGAPNLTAEETPTKKL and VINNVEKSNSSEE. Composition is skewed to acidic residues over residues 613–634 and 705–717; these read SYDDDDDEEEGKMTIDEGDDDP and KDDENVEPDSPED. Positions 899–914 are enriched in low complexity; sequence MIAEQQQQQRHAAAQQ. The span at 915–932 shows a compositional bias: basic and acidic residues; it reads LREREQREQRERERERQH. Low complexity-rich tracts occupy residues 933–950 and 983–999; these read QQQAQQALHQQQQQHAAA and AAQQQQQQQQAAQAQAQ. Positions 1000-1040 are enriched in basic and acidic residues; sequence RDQERERREREAREREAAREREREQAAREAAARDQAAREHA.

In terms of assembly, interacts with ceh-6, sem-4 and sox-2. Interacts with wdr-5.1. In terms of tissue distribution, expression detected in anterior intestine and head region.

The protein resides in the nucleus. Functionally, transcription factor which promotes stress survival and delays aging. Required for cell cycle progression and development of the mesodermal and endodermal embryonic lineages. Required for normal T-cell polarity, for correct migration of QL neuroblast descendants and other cells, for embryonic patterning and for the embryonic expression of hlh-8. Also required for the transdifferentiation of the Y rectal epithelial cell to the PDA motor neuron during larval development. In Caenorhabditis elegans, this protein is Egg-laying defective protein 27.